The following is a 253-amino-acid chain: Sulfur carrier protein FdhD (253 aa).

The active-site Cysteine persulfide intermediate is Cys100.

This sequence belongs to the FdhD family.

Its subcellular location is the cytoplasm. Functionally, required for formate dehydrogenase (FDH) activity. Acts as a sulfur carrier protein that transfers sulfur from IscS to the molybdenum cofactor prior to its insertion into FDH. The sequence is that of Sulfur carrier protein FdhD from Sulfolobus acidocaldarius (strain ATCC 33909 / DSM 639 / JCM 8929 / NBRC 15157 / NCIMB 11770).